Reading from the N-terminus, the 105-residue chain is Large ribosomal subunit protein uL24 (105 aa).

The protein belongs to the universal ribosomal protein uL24 family. As to quaternary structure, part of the 50S ribosomal subunit.

In terms of biological role, one of two assembly initiator proteins, it binds directly to the 5'-end of the 23S rRNA, where it nucleates assembly of the 50S subunit. Its function is as follows. One of the proteins that surrounds the polypeptide exit tunnel on the outside of the subunit. This chain is Large ribosomal subunit protein uL24, found in Psychrobacter arcticus (strain DSM 17307 / VKM B-2377 / 273-4).